Here is a 253-residue protein sequence, read N- to C-terminus: 5'/3'-nucleotidase SurE (253 aa).

A divalent metal cation-binding residues include Asp8, Asp9, Ser39, and Asn92.

It belongs to the SurE nucleotidase family. A divalent metal cation is required as a cofactor.

The protein resides in the cytoplasm. The catalysed reaction is a ribonucleoside 5'-phosphate + H2O = a ribonucleoside + phosphate. It carries out the reaction a ribonucleoside 3'-phosphate + H2O = a ribonucleoside + phosphate. It catalyses the reaction [phosphate](n) + H2O = [phosphate](n-1) + phosphate + H(+). In terms of biological role, nucleotidase with a broad substrate specificity as it can dephosphorylate various ribo- and deoxyribonucleoside 5'-monophosphates and ribonucleoside 3'-monophosphates with highest affinity to 3'-AMP. Also hydrolyzes polyphosphate (exopolyphosphatase activity) with the preference for short-chain-length substrates (P20-25). Might be involved in the regulation of dNTP and NTP pools, and in the turnover of 3'-mononucleotides produced by numerous intracellular RNases (T1, T2, and F) during the degradation of various RNAs. The sequence is that of 5'/3'-nucleotidase SurE from Escherichia fergusonii (strain ATCC 35469 / DSM 13698 / CCUG 18766 / IAM 14443 / JCM 21226 / LMG 7866 / NBRC 102419 / NCTC 12128 / CDC 0568-73).